We begin with the raw amino-acid sequence, 355 residues long: DNA-directed RNA polymerase subunit alpha (355 aa).

The alpha N-terminal domain (alpha-NTD) stretch occupies residues 1–248; that stretch reads MYYNNDVSLC…EQLQPFISSD (248 aa). The alpha C-terminal domain (alpha-CTD) stretch occupies residues 267-355; that stretch reads YDPVLLRKVD…ELAKQHTDED (89 aa).

The protein belongs to the RNA polymerase alpha chain family. Homodimer. The RNAP catalytic core consists of 2 alpha, 1 beta, 1 beta' and 1 omega subunit. When a sigma factor is associated with the core the holoenzyme is formed, which can initiate transcription.

The enzyme catalyses RNA(n) + a ribonucleoside 5'-triphosphate = RNA(n+1) + diphosphate. Functionally, DNA-dependent RNA polymerase catalyzes the transcription of DNA into RNA using the four ribonucleoside triphosphates as substrates. This is DNA-directed RNA polymerase subunit alpha from Wolbachia pipientis wMel.